A 291-amino-acid polypeptide reads, in one-letter code: Ribosomal protein L11 methyltransferase (291 aa).

The S-adenosyl-L-methionine site is built by Thr136, Gly159, Asp181, and Asn228.

It belongs to the methyltransferase superfamily. PrmA family.

The protein localises to the cytoplasm. The enzyme catalyses L-lysyl-[protein] + 3 S-adenosyl-L-methionine = N(6),N(6),N(6)-trimethyl-L-lysyl-[protein] + 3 S-adenosyl-L-homocysteine + 3 H(+). Functionally, methylates ribosomal protein L11. The polypeptide is Ribosomal protein L11 methyltransferase (Rhizobium meliloti (strain 1021) (Ensifer meliloti)).